Reading from the N-terminus, the 336-residue chain is UbiA prenyltransferase domain-containing protein 1 (336 aa).

Residues 1-22 are disordered; sequence MQEMKPAALSGSNGLNGASGSS. Over residues 7 to 22 the composition is skewed to low complexity; it reads AALSGSNGLNGASGSS. 7 helical membrane passes run 79 to 99, 129 to 149, 158 to 178, 180 to 200, 201 to 221, 254 to 274, and 315 to 335; these read LLLL…GNLV, VVMF…LLYF, LALI…GIGL, YVAL…VMFA, HAVQ…PLAL, LSYV…CILA, and LLMG…SLPL.

This sequence belongs to the UbiA prenyltransferase family.

The protein localises to the endoplasmic reticulum membrane. It localises to the golgi apparatus membrane. Its subcellular location is the mitochondrion membrane. It catalyses the reaction menadiol + (2E,6E,10E)-geranylgeranyl diphosphate = menaquinol-4 + diphosphate. It carries out the reaction all-trans-decaprenyl diphosphate + 4-hydroxybenzoate = 4-hydroxy-3-(all-trans-decaprenyl)benzoate + diphosphate. Its pathway is quinol/quinone metabolism; menaquinone biosynthesis. It participates in cofactor biosynthesis; ubiquinone biosynthesis. In terms of biological role, prenyltransferase that mediates the formation of menaquinone-4 (MK-4) and coenzyme Q10. MK-4 is a vitamin K2 isoform required for endothelial cell development. Mediates the conversion of phylloquinone (PK) into MK-4, probably by cleaving the side chain of phylloquinone (PK) to release 2-methyl-1,4-naphthoquinone (menadione; K3) and then prenylating it with geranylgeranyl pyrophosphate (GGPP) to form MK-4. Also plays a role in cardiovascular development independently of MK-4 biosynthesis, by acting as a coenzyme Q10 biosynthetic enzyme: coenzyme Q10, also named ubiquinone, plays an important antioxidant role in the cardiovascular system. Mediates biosynthesis of coenzyme Q10 in the Golgi membrane, leading to protect cardiovascular tissues from nos3/eNOS-dependent oxidative stress. The polypeptide is UbiA prenyltransferase domain-containing protein 1 (ubiad1) (Danio rerio (Zebrafish)).